We begin with the raw amino-acid sequence, 201 residues long: Holliday junction branch migration complex subunit RuvA (201 aa).

The domain I stretch occupies residues M1 to A64. The segment at Q65–E143 is domain II. The interval H144–S154 is flexible linker. The tract at residues S154 to L201 is domain III.

The protein belongs to the RuvA family. Homotetramer. Forms an RuvA(8)-RuvB(12)-Holliday junction (HJ) complex. HJ DNA is sandwiched between 2 RuvA tetramers; dsDNA enters through RuvA and exits via RuvB. An RuvB hexamer assembles on each DNA strand where it exits the tetramer. Each RuvB hexamer is contacted by two RuvA subunits (via domain III) on 2 adjacent RuvB subunits; this complex drives branch migration. In the full resolvosome a probable DNA-RuvA(4)-RuvB(12)-RuvC(2) complex forms which resolves the HJ.

It is found in the cytoplasm. In terms of biological role, the RuvA-RuvB-RuvC complex processes Holliday junction (HJ) DNA during genetic recombination and DNA repair, while the RuvA-RuvB complex plays an important role in the rescue of blocked DNA replication forks via replication fork reversal (RFR). RuvA specifically binds to HJ cruciform DNA, conferring on it an open structure. The RuvB hexamer acts as an ATP-dependent pump, pulling dsDNA into and through the RuvAB complex. HJ branch migration allows RuvC to scan DNA until it finds its consensus sequence, where it cleaves and resolves the cruciform DNA. In Actinobacillus pleuropneumoniae serotype 5b (strain L20), this protein is Holliday junction branch migration complex subunit RuvA.